The chain runs to 185 residues: Putative sulfur carrier protein YrkF (185 aa).

The Cysteine persulfide intermediate role is filled by cysteine 15. A Rhodanese domain is found at 101–185; that stretch reads SDESLNILDV…GMRDWTGKTE (85 aa).

Belongs to the sulfur carrier protein TusA family.

The sequence is that of Putative sulfur carrier protein YrkF (yrkF) from Bacillus subtilis (strain 168).